A 311-amino-acid chain; its full sequence is Mediator of RNA polymerase II transcription subunit 27-A (311 aa).

Belongs to the Mediator complex subunit 27 family. Component of the Mediator complex.

It localises to the nucleus. Its function is as follows. Component of the Mediator complex, a coactivator involved in the regulated transcription of nearly all RNA polymerase II-dependent genes. Mediator functions as a bridge to convey information from gene-specific regulatory proteins to the basal RNA polymerase II transcription machinery. Mediator is recruited to promoters by direct interactions with regulatory proteins and serves as a scaffold for the assembly of a functional preinitiation complex with RNA polymerase II and the general transcription factors. The sequence is that of Mediator of RNA polymerase II transcription subunit 27-A (med27-a) from Xenopus laevis (African clawed frog).